The chain runs to 278 residues: Prohibitin-7, mitochondrial (278 aa).

Topologically, residues 1 to 14 (MNVKKVPNVPGSPA) are mitochondrial matrix. Residues 15–37 (LSALLKLGVIGGLGLYCIGSSMY) form a helical; Signal-anchor for type II membrane protein membrane-spanning segment. Residues 38–278 (NVDGGHRAIV…NSSDLLISKQ (241 aa)) are Mitochondrial intermembrane-facing. A coiled-coil region spans residues 186-220 (KEFTEAIEKKQVAAQEAERAKFIVEKAEQDKKSAI).

This sequence belongs to the prohibitin family. As to quaternary structure, component of a prohibitin multimeric complex in mitochondrial membranes.

Its subcellular location is the mitochondrion inner membrane. Prohibitin probably acts as a holdase/unfoldase for the stabilization of newly synthesized mitochondrial proteins. The protein is Prohibitin-7, mitochondrial (PHB7) of Arabidopsis thaliana (Mouse-ear cress).